Consider the following 119-residue polypeptide: Holo-[acyl-carrier-protein] synthase (119 aa).

Asp-8 and Glu-59 together coordinate Mg(2+).

The protein belongs to the P-Pant transferase superfamily. AcpS family. The cofactor is Mg(2+).

It localises to the cytoplasm. The enzyme catalyses apo-[ACP] + CoA = holo-[ACP] + adenosine 3',5'-bisphosphate + H(+). Functionally, transfers the 4'-phosphopantetheine moiety from coenzyme A to a Ser of acyl-carrier-protein. This is Holo-[acyl-carrier-protein] synthase from Streptococcus agalactiae serotype Ia (strain ATCC 27591 / A909 / CDC SS700).